Reading from the N-terminus, the 635-residue chain is MDGSCDCIEPLWQADDLLVKYQYISDFFIALAYFSIPLELIYFVKKSAFFPYRWVLIQFGAFIVLCGATHLINLWTFAIYTKTIAVVLTVAKAATAVVSCITALMLVHIIPDLLNVKLRERFLKDKADELDREMGIIRTQEETGRHVHMLTHEIRSTLDRHTILRTTLVELGRTLVLAECALWMPTRSGSALQLSHTIYNSAAIGSVVPINLPIVSKVFNSNRVVKIPHTSPLASITADKSRYVPPEVVAIRVPLLHLTNFQINDWPELSAKSFAVMVLMLPPDSAREWRPHERELVEVVADQVAVALSHAAILEESMRARDLLMEQNIALDAARREAEMAICARNDFLAVMNHEMRTPMRAIVSLSSLLLETNLSAEQRLMVETILKSSDLLATLTNDVLDVSKLENGSLELEIAPFNLHSTFTDVVNLIKPVAACKRLSVMVTLAPELPLHAIGDQKRLMQIILNVAGNSIKFTKEGHVSITASMARPDALRGPHEPDYHPVVSDGFFYLAVQVKDTGCGISPQDMPHTFRKFAHPENAGKWNSGSGLGLALSRRFVSLMEGNIWLESEGVGKGCTAMFFVKLGMPEKPNANLRRMAPHPLQPNQGAGGPDALSISIMDSNPRVPRVRYQSSV.

3 consecutive transmembrane segments (helical) span residues 24–44 (ISDF…IYFV), 59–79 (FGAF…TFAI), and 94–114 (ATAV…PDLL). 2 residues coordinate Cu cation: cysteine 66 and histidine 70. Residues 159–308 (DRHTILRTTL…VVADQVAVAL (150 aa)) enclose the GAF domain. In terms of domain architecture, Histidine kinase spans 351-589 (VMNHEMRTPM…MFFVKLGMPE (239 aa)). At histidine 354 the chain carries Phosphohistidine; by autocatalysis.

The protein belongs to the ethylene receptor family. Homodimer. Cu cation is required as a cofactor.

It localises to the endoplasmic reticulum membrane. It catalyses the reaction ATP + protein L-histidine = ADP + protein N-phospho-L-histidine.. Functionally, ethylene receptor related to bacterial two-component regulators. Acts as a negative regulator of ethylene signaling. May play a role in the regulation of flowering by up-regulating GI (GIGANTEA) and RCN1 and regulate starch accumulation by down-regulating the alpha-amylase AMY3D. The protein is Probable ethylene response sensor 2 (ERS2) of Oryza sativa subsp. japonica (Rice).